Reading from the N-terminus, the 238-residue chain is Probable transcriptional regulatory protein SERP0322 (238 aa).

Belongs to the TACO1 family. YeeN subfamily.

The protein resides in the cytoplasm. The chain is Probable transcriptional regulatory protein SERP0322 from Staphylococcus epidermidis (strain ATCC 35984 / DSM 28319 / BCRC 17069 / CCUG 31568 / BM 3577 / RP62A).